Here is a 190-residue protein sequence, read N- to C-terminus: Tereporin-Ca1 (190 aa).

The interval 2–21 is N-terminal region; sequence TAGSSLAGTTLSGLAASGYR. The phosphocholine site is built by G78, S96, P98, Y131, and Y132. Positions 138–140 match the Cell attachment site, crucial for protein stability motif; sequence KGE.

It belongs to the actinoporin family. Conoidea subfamily. Octamer or nonamer in membranes. Monomer in the soluble state. In terms of tissue distribution, expressed by the venom duct.

Its subcellular location is the secreted. The protein localises to the nematocyst. The protein resides in the target cell membrane. In terms of biological role, pore-forming protein that forms pores of around 1 nm and causes cardiac stimulation and cytolysis. The sequence is that of Tereporin-Ca1 from Terebra anilis (Auger snail).